A 121-amino-acid polypeptide reads, in one-letter code: Large ribosomal subunit protein uL18 (121 aa).

Belongs to the universal ribosomal protein uL18 family. Part of the 50S ribosomal subunit; part of the 5S rRNA/L5/L18/L25 subcomplex. Contacts the 5S and 23S rRNAs.

This is one of the proteins that bind and probably mediate the attachment of the 5S RNA into the large ribosomal subunit, where it forms part of the central protuberance. This chain is Large ribosomal subunit protein uL18, found in Paraburkholderia phymatum (strain DSM 17167 / CIP 108236 / LMG 21445 / STM815) (Burkholderia phymatum).